The following is a 447-amino-acid chain: Glutamate--tRNA ligase 2 (447 aa).

The 'HIGH' region signature appears at 9 to 19; sequence PSPTGYLHIGN. Residues 240–244 carry the 'KMSKS' region motif; sequence GLSKR. Lys243 contacts ATP.

Belongs to the class-I aminoacyl-tRNA synthetase family. Glutamate--tRNA ligase type 1 subfamily. Monomer.

The protein localises to the cytoplasm. The enzyme catalyses tRNA(Glu) + L-glutamate + ATP = L-glutamyl-tRNA(Glu) + AMP + diphosphate. Catalyzes the attachment of glutamate to tRNA(Glu) in a two-step reaction: glutamate is first activated by ATP to form Glu-AMP and then transferred to the acceptor end of tRNA(Glu). This Methylobacterium sp. (strain 4-46) protein is Glutamate--tRNA ligase 2.